The chain runs to 188 residues: Crossover junction endodeoxyribonuclease RuvC (188 aa).

Catalysis depends on residues D7, E68, and D141. Mg(2+) is bound by residues D7, E68, and D141.

Belongs to the RuvC family. In terms of assembly, homodimer which binds Holliday junction (HJ) DNA. The HJ becomes 2-fold symmetrical on binding to RuvC with unstacked arms; it has a different conformation from HJ DNA in complex with RuvA. In the full resolvosome a probable DNA-RuvA(4)-RuvB(12)-RuvC(2) complex forms which resolves the HJ. Requires Mg(2+) as cofactor.

It is found in the cytoplasm. It carries out the reaction Endonucleolytic cleavage at a junction such as a reciprocal single-stranded crossover between two homologous DNA duplexes (Holliday junction).. Its function is as follows. The RuvA-RuvB-RuvC complex processes Holliday junction (HJ) DNA during genetic recombination and DNA repair. Endonuclease that resolves HJ intermediates. Cleaves cruciform DNA by making single-stranded nicks across the HJ at symmetrical positions within the homologous arms, yielding a 5'-phosphate and a 3'-hydroxyl group; requires a central core of homology in the junction. The consensus cleavage sequence is 5'-(A/T)TT(C/G)-3'. Cleavage occurs on the 3'-side of the TT dinucleotide at the point of strand exchange. HJ branch migration catalyzed by RuvA-RuvB allows RuvC to scan DNA until it finds its consensus sequence, where it cleaves and resolves the cruciform DNA. In Mycobacterium avium (strain 104), this protein is Crossover junction endodeoxyribonuclease RuvC.